The following is a 433-amino-acid chain: Urokinase-type plasminogen activator (433 aa).

A signal peptide spans 1–20 (MRVLLACLLVCALVVSDSDG). The 37-residue stretch at 29 to 65 (GESNCGCLNGGKCVTYKYFSNIQRCSCPKKFQGEHCE) folds into the EGF-like domain. Disulfide bonds link Cys-33–Cys-41, Cys-35–Cys-53, Cys-55–Cys-64, Cys-72–Cys-153, Cys-93–Cys-135, and Cys-124–Cys-148. The tract at residues 36–59 (LNGGKCVTYKYFSNIQRCSCPKKF) is binds urokinase plasminogen activator surface receptor. The Kringle domain occupies 72–153 (CYQGNGHSYR…FVQFCMVQDC (82 aa)). The segment at 154-180 (SVGKSPSSPREKEEFQCGQKALRPRFK) is connecting peptide. Ser-160 carries the phosphoserine modification. 6 cysteine pairs are disulfide-bonded: Cys-170/Cys-301, Cys-211/Cys-227, Cys-219/Cys-290, Cys-315/Cys-384, Cys-347/Cys-363, and Cys-374/Cys-402. Residues 181–426 (IVGGQVTNAE…FLPWINTHTR (246 aa)) form the Peptidase S1 domain. Catalysis depends on charge relay system residues His-226 and Asp-277. Ser-378 (charge relay system) is an active-site residue.

The protein belongs to the peptidase S1 family. Found in high and low molecular mass forms. Each consists of two chains, A and B. The high molecular mass form contains a long chain A which is cleaved to yield a short chain A. Forms heterodimer with SERPINA5. Binds LRP1B; binding is followed by internalization and degradation. Interacts with MRC2. Interacts with PLAUR. In complex with SERPINE1, interacts with PLAUR/uPAR. Interacts with SORL1 and LRP1, either alone or in complex with SERPINE1; these interactions are abolished in the presence of LRPAP1/RAP. The ternary complex composed of PLAUR-PLAU-PAI1 also interacts with SORLA. Post-translationally, produced as an inactive single-chain protein (pro-uPA or sc-uPA), is processed into the active disulfide-linked two-chain form of PLAU/uPA by a proteolytic event mediated, at least, by TMPRSS4.

It localises to the secreted. It catalyses the reaction Specific cleavage of Arg-|-Val bond in plasminogen to form plasmin.. Inhibited by SERPINA5. Inhibited by SERPINE1. Specifically cleaves the zymogen plasminogen to form the active enzyme plasmin. In Bos taurus (Bovine), this protein is Urokinase-type plasminogen activator (PLAU).